We begin with the raw amino-acid sequence, 70 residues long: Conotoxin Cl9.1 (70 aa).

An N-terminal signal peptide occupies residues 1–20 (MMGKLGVVLFICLVLFPLET). Residues 21–50 (LQLEGGQQADRHVDQLEGNPNRETRTIEVR) constitute a propeptide that is removed on maturation. 3 disulfide bridges follow: Cys-51–Cys-63, Cys-56–Cys-67, and Cys-61–Cys-70.

It belongs to the conotoxin M superfamily. Expressed by the venom duct.

It localises to the secreted. The sequence is that of Conotoxin Cl9.1 from Californiconus californicus (California cone).